Consider the following 291-residue polypeptide: Pantothenate synthetase (291 aa).

30–37 provides a ligand contact to ATP; that stretch reads MGALHAGH. Histidine 37 acts as the Proton donor in catalysis. Glutamine 61 is a binding site for (R)-pantoate. Glutamine 61 provides a ligand contact to beta-alanine. Residue 147 to 150 participates in ATP binding; it reads GQKD. Position 153 (glutamine 153) interacts with (R)-pantoate. Residues valine 176 and 184–187 each bind ATP; that span reads LSSR.

This sequence belongs to the pantothenate synthetase family. In terms of assembly, homodimer.

The protein resides in the cytoplasm. The catalysed reaction is (R)-pantoate + beta-alanine + ATP = (R)-pantothenate + AMP + diphosphate + H(+). It participates in cofactor biosynthesis; (R)-pantothenate biosynthesis; (R)-pantothenate from (R)-pantoate and beta-alanine: step 1/1. Functionally, catalyzes the condensation of pantoate with beta-alanine in an ATP-dependent reaction via a pantoyl-adenylate intermediate. The polypeptide is Pantothenate synthetase (Koribacter versatilis (strain Ellin345)).